The following is a 568-amino-acid chain: AT-rich interactive domain-containing protein 3B (568 aa).

M1 is subject to N-acetylmethionine. A compositionally biased stretch (low complexity) spans 1-22 (MEPLQQQQQQQQQKQPQQPLLQ). The interval 1-174 (MEPLQQQQQQ…SVPTAGQPSW (174 aa)) is disordered. S87 bears the Phosphoserine mark. A compositionally biased stretch (acidic residues) spans 88 to 107 (EPEEEEGGLEDEDGDDDVAE). A compositionally biased stretch (basic and acidic residues) spans 151 to 160 (TKEDHTKDAS). The tract at residues 201–374 (SRDFAKLYEL…SSPKIRFSIL (174 aa)) is interaction with RB1. Residues 213 to 305 (DPERKEFLDD…YLYAYECEKK (93 aa)) form the ARID domain. Residue S309 is modified to Phosphoserine. Position 370 is an asymmetric dimethylarginine (R370). Positions 378 to 403 (SSSGTSASSPRIPPASTLRKGDGVPV) are disordered. The REKLES domain occupies 425 to 522 (GPLEHLRERL…GVLFAQKPVV (98 aa)). An interaction with ARID3A region spans residues 495–518 (SNIGSINMSVDIDGTTYTGVLFAQ). Residues 529 to 559 (TPQSIGSSASSSNSSSSHCSPSPTSSRGTPS) show a composition bias toward low complexity. A disordered region spans residues 529–568 (TPQSIGSSASSSNSSSSHCSPSPTSSRGTPSAEPSTSWSL).

As to quaternary structure, heterodimer with ARID3A. Interacts with unphosphorylated RB1. As to expression, expressed at high levels in testis. Also expressed in prostate, thyroid and thymus.

The protein resides in the nucleus. Transcription factor involved in the production of cranial mesenchymal tissues. Favors nuclear targeting of ARID3A. This Mus musculus (Mouse) protein is AT-rich interactive domain-containing protein 3B (Arid3b).